The following is a 92-amino-acid chain: Small ribosomal subunit protein bS20 (92 aa).

The interval 1–25 is disordered; sequence MANSAQARKRARQAAKANSHNSALR.

It belongs to the bacterial ribosomal protein bS20 family.

Its function is as follows. Binds directly to 16S ribosomal RNA. In Paraburkholderia phytofirmans (strain DSM 17436 / LMG 22146 / PsJN) (Burkholderia phytofirmans), this protein is Small ribosomal subunit protein bS20.